A 364-amino-acid polypeptide reads, in one-letter code: Thymidine kinase (364 aa).

36–43 (GPFGVGKT) is a binding site for ATP. Catalysis depends on glutamate 64, which acts as the Proton acceptor. Glutamine 108 provides a ligand contact to substrate. ATP is bound at residue arginine 201. Arginine 207 provides a ligand contact to substrate.

This sequence belongs to the herpesviridae thymidine kinase family. Homodimer.

It carries out the reaction thymidine + ATP = dTMP + ADP + H(+). Its function is as follows. Catalyzes the transfer of the gamma-phospho group of ATP to thymidine to generate dTMP in the salvage pathway of pyrimidine synthesis. The dTMP serves as a substrate for DNA polymerase during viral DNA replication. Allows the virus to be reactivated and to grow in non-proliferative cells lacking a high concentration of phosphorylated nucleic acid precursors. This chain is Thymidine kinase, found in Infectious laryngotracheitis virus (strain Thorne V882) (ILTV).